The following is a 927-amino-acid chain: DNA-binding protein RFX6 (927 aa).

Disordered stretches follow at residues methionine 1 to proline 21 and asparagine 81 to serine 108. The RFX-type winged-helix DNA-binding region spans threonine 123–glutamate 198.

Belongs to the RFX family. As to quaternary structure, interacts with RFX3. In terms of tissue distribution, in the adult pancreas, expression is restricted to the islets where it could be detected in all endocrine lineages.

Its subcellular location is the nucleus. In terms of biological role, transcription factor required to direct islet cell differentiation during endocrine pancreas development. Specifically required for the differentiation of 4 of the 5 islet cell types and for the production of insulin. Not required for pancreatic PP (polypeptide-producing) cells differentiation. Acts downstream of NEUROG3 and regulates the transcription factors involved in beta-cell maturation and function, thereby restricting the expression of the beta-cell differentiation and specification genes, and thus the beta-cell fate choice. Activates transcription by forming a heterodimer with RFX3 and binding to the X-box in the promoter of target genes. Involved in glucose-stimulated insulin secretion by promoting insulin and L-type calcium channel gene transcription. The polypeptide is DNA-binding protein RFX6 (Rfx6) (Mus musculus (Mouse)).